The primary structure comprises 138 residues: Small ribosomal subunit protein uS11c (138 aa).

Belongs to the universal ribosomal protein uS11 family. As to quaternary structure, part of the 30S ribosomal subunit.

Its subcellular location is the plastid. The chain is Small ribosomal subunit protein uS11c from Cuscuta obtusiflora (Peruvian dodder).